Reading from the N-terminus, the 318-residue chain is Replication factor C small subunit (318 aa).

43-50 is an ATP binding site; it reads GSVGTGKT.

Belongs to the activator 1 small subunits family. RfcS subfamily. In terms of assembly, heteromultimer composed of small subunits (RfcS) and large subunits (RfcL).

Its function is as follows. Part of the RFC clamp loader complex which loads the PCNA sliding clamp onto DNA. The chain is Replication factor C small subunit from Thermoplasma acidophilum (strain ATCC 25905 / DSM 1728 / JCM 9062 / NBRC 15155 / AMRC-C165).